We begin with the raw amino-acid sequence, 376 residues long: D-alanine--D-alanine ligase B (376 aa).

Positions 155 to 361 (KRLMRDAGLP…QTDLMDKLIA (207 aa)) constitute an ATP-grasp domain. 184–239 (AALGTPDLFVKPANLGSSVGVSRARSEEEFAASCALAFRYDRKILVEQALNGAREI) lines the ATP pocket. Residues D316, E328, and N330 each contribute to the Mg(2+) site.

It belongs to the D-alanine--D-alanine ligase family. The cofactor is Mg(2+). Requires Mn(2+) as cofactor.

Its subcellular location is the cytoplasm. It catalyses the reaction 2 D-alanine + ATP = D-alanyl-D-alanine + ADP + phosphate + H(+). It functions in the pathway cell wall biogenesis; peptidoglycan biosynthesis. Its function is as follows. Cell wall formation. The protein is D-alanine--D-alanine ligase B of Bradyrhizobium diazoefficiens (strain JCM 10833 / BCRC 13528 / IAM 13628 / NBRC 14792 / USDA 110).